The primary structure comprises 485 residues: Adenosylhomocysteinase (485 aa).

Substrate is bound by residues Thr64, Asp139, and Glu205. Position 206-208 (206-208 (TTT)) interacts with NAD(+). Substrate contacts are provided by Lys235 and Asp239. NAD(+) is bound by residues Asn240, 269-274 (GYGDVG), Glu292, Asn327, 348-350 (IGH), and Asn397.

It belongs to the adenosylhomocysteinase family. NAD(+) serves as cofactor.

The catalysed reaction is S-adenosyl-L-homocysteine + H2O = L-homocysteine + adenosine. It functions in the pathway amino-acid biosynthesis; L-homocysteine biosynthesis; L-homocysteine from S-adenosyl-L-homocysteine: step 1/1. Its function is as follows. Adenosylhomocysteine is a competitive inhibitor of S-adenosyl-L-methionine-dependent methyl transferase reactions; therefore adenosylhomocysteinase may play a key role in the control of methylations via regulation of the intracellular concentration of adenosylhomocysteine. In Medicago sativa (Alfalfa), this protein is Adenosylhomocysteinase (SAHH).